The sequence spans 887 residues: Transportin-2 (887 aa).

20 HEAT repeats span residues 9–36, 41–79, 88–121, 127–164, 171–201, 214–241, 253–280, 296–386, 394–422, 434–461, 475–508, 516–549, 557–595, 603–654, 665–696, 704–737, 745–780, 788–821, 830–861, and 864–884; these read GLQQ…DKLK, FPDF…AHYQ, FIKQ…KGEL, LLPQ…LDSD, NIMI…QFIM, FIEH…VMLL, HSII…FWLT, VQLI…LANV, HLLP…GAIA, PELI…TLSR, LKPL…EEEA, LSYI…ADSV, EYIQ…TALQ, EPVY…GLGG, IMTL…KACF, AEFM…MQMG, QMVL…YVCP, QQFI…IGVN, IFFC…KDQV, and ENWQ…LAAF. In terms of domain architecture, Importin N-terminal spans 31 to 99; the sequence is VQDKLKQLNQ…KQECLNNIGD (69 aa). Positions 344–363 are disordered; the sequence is TLTHEAERPDSSEDAEDDDD. Lys852 is modified (N6-acetyllysine).

Belongs to the importin beta family. Importin beta-2 subfamily.

It is found in the cytoplasm. The protein resides in the nucleus. Its function is as follows. Probably functions in nuclear protein import as nuclear transport receptor. Serves as receptor for nuclear localization signals (NLS) in cargo substrates. Is thought to mediate docking of the importin/substrate complex to the nuclear pore complex (NPC) through binding to nucleoporin and the complex is subsequently translocated through the pore by an energy requiring, Ran-dependent mechanism. At the nucleoplasmic side of the NPC, Ran binds to the importin, the importin/substrate complex dissociates and importin is re-exported from the nucleus to the cytoplasm where GTP hydrolysis releases Ran. The directionality of nuclear import is thought to be conferred by an asymmetric distribution of the GTP- and GDP-bound forms of Ran between the cytoplasm and nucleus. This Mus musculus (Mouse) protein is Transportin-2 (Tnpo2).